Consider the following 304-residue polypeptide: tRNA pseudouridine synthase B (304 aa).

D38 acts as the Nucleophile in catalysis.

The protein belongs to the pseudouridine synthase TruB family. Type 1 subfamily.

The catalysed reaction is uridine(55) in tRNA = pseudouridine(55) in tRNA. Responsible for synthesis of pseudouridine from uracil-55 in the psi GC loop of transfer RNAs. The chain is tRNA pseudouridine synthase B from Listeria monocytogenes serovar 1/2a (strain ATCC BAA-679 / EGD-e).